A 122-amino-acid chain; its full sequence is NADPH-dependent 7-cyano-7-deazaguanine reductase (122 aa).

Cysteine 34 functions as the Thioimide intermediate in the catalytic mechanism. Aspartate 41 functions as the Proton donor in the catalytic mechanism. Substrate contacts are provided by residues 56-58 (VEL) and 75-76 (HE).

It belongs to the GTP cyclohydrolase I family. QueF type 1 subfamily.

The protein localises to the cytoplasm. The enzyme catalyses 7-aminomethyl-7-carbaguanine + 2 NADP(+) = 7-cyano-7-deazaguanine + 2 NADPH + 3 H(+). The protein operates within tRNA modification; tRNA-queuosine biosynthesis. Catalyzes the NADPH-dependent reduction of 7-cyano-7-deazaguanine (preQ0) to 7-aminomethyl-7-deazaguanine (preQ1). This is NADPH-dependent 7-cyano-7-deazaguanine reductase from Anaeromyxobacter sp. (strain Fw109-5).